Consider the following 452-residue polypeptide: FAD-linked oxidoreductase DDB_G0289697 (452 aa).

Residues 44–212 (VVNTPLLIVY…TDFTFKLHPV (169 aa)) form the FAD-binding PCMH-type domain. Pros-8alpha-FAD histidine is present on histidine 81.

Belongs to the oxygen-dependent FAD-linked oxidoreductase family. It depends on FAD as a cofactor.

This is FAD-linked oxidoreductase DDB_G0289697 from Dictyostelium discoideum (Social amoeba).